The following is a 537-amino-acid chain: Probable metalloreductase AIM14 (537 aa).

7 consecutive transmembrane segments (helical) span residues Gly20–Ile40, Ile58–Gly78, Arg95–Leu112, Lys133–Ile155, Phe167–Ile187, Val194–His216, and Val221–Leu238. A Ferric oxidoreductase domain is found at Gly97–Ile213. The region spanning Ile187–Pro363 is the FAD-binding FR-type domain. The tract at residues Glu432–Glu475 is disordered.

This sequence belongs to the ferric reductase (FRE) family. AIM14 subfamily.

Its subcellular location is the membrane. Functionally, probable cell surface metalloreductase. May be involved in iron or copper homeostasis. This Candida dubliniensis (strain CD36 / ATCC MYA-646 / CBS 7987 / NCPF 3949 / NRRL Y-17841) (Yeast) protein is Probable metalloreductase AIM14 (AIM14).